An 898-amino-acid polypeptide reads, in one-letter code: MAKWVYTFGAGQAEGSAEDRDRLGGKGANLAEMCNLGLPVPPGLTIVTAACNSYLEKGRSMPEGLREQVREGITRMEKITGRVFGDTNRPLLLSVRSGARASMPGMMDTVLNLGLNDQSVHALGHDAGDARFAWDSYRRFIQMYGDVVMGVDHEVFEEVLEDEKARLGHEQDTELSAVEWQHVISRYKEAIEEVLGLPFPQDPEVQLWGAIGAVFSSWMNPRAITYRHLHGIPAGWGTAVNVQAMVFGNLGNSSATGVAFTRNPSTGEKELYGEFLVNAQGEDVVAGIRTPQNITEAARIASGSDKPSLEKLMPEAFAEFEKICNALERHYRDMQDIEFTIERGKLWMLQTRSGKRTAKSALKIAVDMAEEGLISKEEAVARIDPASLDQLLHPTIDPHARRDIIGSGLPASPGAATGEIVFSSDEAVQAVKEGRKVILVRVETSPEDIHGMHAAEGILTTRGGMTSHAAVVARGMGTPCVSGAGSIRVDQRNELLIAASVTLRKGDVITIDGSSGQVLKGEIPMLQPELSGDFGKIMQWADASRRMTVRTNAETPADARAARSFGAEGIGLCRTEHMFFEDDRINVMREMILAEDEAGRRTALAKLLPMQRSDFVELFSIMHGLPVTIRLLDPPLHEFLPKTDEEIAEVARVLTIDPAELRQRVDALHEFNPMLGHRGCRLAISYPEIAEMQARAIFEAAVQAAHDTGAAVVPEIMVPLVGLRAELDYVKARIEAVAKEVIGEAGVNIDYLIGTMIELPRAALRADTIAESADFFSFGTNDLTQTTFGISRDDAALFLATYQQKGIIEQDPFVSLDFEGVGELIQIAAERGRRTKNGLKLGICGEHGGDPASIRFCEEAGLDYVSCSPFRVPIARLAAAQATINGREVAEVQALAAS.

The interval 1–355 (MAKWVYTFGA…LWMLQTRSGK (355 aa)) is N-terminal. Position 96 (R96) interacts with ATP. A linker 1 region spans residues 356 to 412 (RTAKSALKIAVDMAEEGLISKEEAVARIDPASLDQLLHPTIDPHARRDIIGSGLPAS). Residues 413–511 (PGAATGEIVF…TLRKGDVITI (99 aa)) are central. T466 carries the phosphothreonine; by PDRP1 modification. Catalysis depends on H468, which acts as the Tele-phosphohistidine intermediate. Positions 512–546 (DGSSGQVLKGEIPMLQPELSGDFGKIMQWADASRR) are linker 2. Positions 547–898 (MTVRTNAETP…VAEVQALAAS (352 aa)) are C-terminal. Residues R574, R630, E758, G779, T780, N781, and D782 each contribute to the substrate site. A Mg(2+)-binding site is contributed by E758. A Mg(2+)-binding site is contributed by D782. The Proton donor role is filled by C844.

This sequence belongs to the PEP-utilizing enzyme family. In terms of assembly, homodimer. Mg(2+) is required as a cofactor. Phosphorylation of Thr-466 in the dark inactivates the enzyme. Dephosphorylation upon light stimulation reactivates the enzyme.

It carries out the reaction pyruvate + phosphate + ATP = phosphoenolpyruvate + AMP + diphosphate + H(+). Its activity is regulated as follows. Activated by light-induced dephosphorylation. Inhibited by dark-induced phosphorylation. Both reactions are catalyzed by PDRP1. Functionally, catalyzes the reversible phosphorylation of pyruvate and phosphate. This chain is Pyruvate, phosphate dikinase (ppdK), found in Rhizobium meliloti (strain 1021) (Ensifer meliloti).